The primary structure comprises 399 residues: Bone morphogenetic protein 8B (399 aa).

Residues 1–19 (MAARPGLLWLLGLALCVLG) form the signal peptide. The propeptide occupies 20 to 260 (GGHLSHPPHV…ANQSPVRAPR (241 aa)). Asparagine 155 and asparagine 340 each carry an N-linked (GlcNAc...) asparagine glycan. Cystine bridges form between cysteine 298–cysteine 364, cysteine 327–cysteine 396, and cysteine 331–cysteine 398.

The protein belongs to the TGF-beta family. Homodimer; disulfide-linked. As to expression, expressed in testis. Expressed in decidual cells of the uterus and in trophoblast cells of the labyrinthine region of the placenta and in the inner root sheath of hair follicles of early postnatal skin. Expressed in the extraembryonic ectoderm in pregastrula and gastrula stage mouse embryos. Expressed in brown adipose tissue and brain.

Its subcellular location is the secreted. In terms of biological role, induces cartilage and bone formation. May be the osteoinductive factor responsible for the phenomenon of epithelial osteogenesis. Plays a role in calcium regulation and bone homeostasis. Involved in the generation of primordial germ cells; this function involves Bmp4 in a synergistic manner though separate receptor complexes seem to be involved. Required for the initiation and maintenance of spermatogenesis. Signaling protein involved in regulation of thermogenesis and energy balance. Proposed to increase the peripheral response of brown adipose tissue (BAT) to adrenergic stimulation while acting centrally in the hypothalamus to increase sympathetic output to BAT. This is Bone morphogenetic protein 8B (Bmp8b) from Mus musculus (Mouse).